Here is a 181-residue protein sequence, read N- to C-terminus: Inner membrane-spanning protein YciB (181 aa).

Transmembrane regions (helical) follow at residues 22–42 (IYTATGALIAATAVQIAILYF), 50–70 (MHLVTFAMVTVFGTLTLAFHD), 72–92 (AFIKWKVTIIYSLFAIALAVS), 118–138 (VTWYWALFFIGCGVLNVYVAF), and 148–168 (FKVFGLTALTLLNTVISVFYI).

This sequence belongs to the YciB family.

It is found in the cell inner membrane. Functionally, plays a role in cell envelope biogenesis, maintenance of cell envelope integrity and membrane homeostasis. The chain is Inner membrane-spanning protein YciB from Shewanella denitrificans (strain OS217 / ATCC BAA-1090 / DSM 15013).